We begin with the raw amino-acid sequence, 202 residues long: Small ribosomal subunit protein uS4 (202 aa).

Residues 23–42 (RKAARRSYPPGQHGQARRKR) form a disordered region. The S4 RNA-binding domain occupies 90-154 (MRLDNLVFRL…SRKLVTANLE (65 aa)).

Belongs to the universal ribosomal protein uS4 family. In terms of assembly, part of the 30S ribosomal subunit. Contacts protein S5. The interaction surface between S4 and S5 is involved in control of translational fidelity.

Its function is as follows. One of the primary rRNA binding proteins, it binds directly to 16S rRNA where it nucleates assembly of the body of the 30S subunit. In terms of biological role, with S5 and S12 plays an important role in translational accuracy. This Synechococcus elongatus (strain ATCC 33912 / PCC 7942 / FACHB-805) (Anacystis nidulans R2) protein is Small ribosomal subunit protein uS4.